A 193-amino-acid chain; its full sequence is NADH-quinone oxidoreductase subunit B (193 aa).

[4Fe-4S] cluster is bound by residues Cys72, Cys73, Cys137, and Cys167.

It belongs to the complex I 20 kDa subunit family. In terms of assembly, NDH-1 is composed of 14 different subunits. Subunits NuoB, C, D, E, F, and G constitute the peripheral sector of the complex. The cofactor is [4Fe-4S] cluster.

It localises to the cell inner membrane. The enzyme catalyses a quinone + NADH + 5 H(+)(in) = a quinol + NAD(+) + 4 H(+)(out). Functionally, NDH-1 shuttles electrons from NADH, via FMN and iron-sulfur (Fe-S) centers, to quinones in the respiratory chain. The immediate electron acceptor for the enzyme in this species is believed to be ubiquinone. Couples the redox reaction to proton translocation (for every two electrons transferred, four hydrogen ions are translocated across the cytoplasmic membrane), and thus conserves the redox energy in a proton gradient. In Bartonella quintana (strain Toulouse) (Rochalimaea quintana), this protein is NADH-quinone oxidoreductase subunit B.